The following is a 528-amino-acid chain: 4-nitrophenol 4-monooxygenase/4-nitrocatechol 2-monooxygenase, oxygenase component (528 aa).

Residue 100 to 104 (RPPAG) participates in substrate binding. FAD is bound by residues 153–155 (PMF), 159–162 (QFDR), and T194. Position 205–206 (205–206 (GN)) interacts with substrate. 461-464 (TMQR) is an FAD binding site.

Belongs to the FADH(2)-utilizing monooxygenase family. As to quaternary structure, the 4-NP/4-NCA monooxygenase is composed of an oxygenase component NpcA and a reductase component NpcB. Requires FAD as cofactor.

It carries out the reaction 4-nitrophenol + NADH + O2 + H(+) = 4-nitrocatechol + NAD(+) + H2O. It catalyses the reaction 4-nitrocatechol + NADPH + O2 = 2-hydroxy-1,4-benzoquinone + nitrite + NADP(+) + H2O. The catalysed reaction is 4-nitrocatechol + NADH + O2 = 2-hydroxy-1,4-benzoquinone + nitrite + NAD(+) + H2O. The protein operates within aromatic compound metabolism. It functions in the pathway xenobiotic degradation. Its activity is regulated as follows. Inhibited by methimazole. Involved in the degradation of para-nitrophenol (4-NP). Catalyzes both the initial hydroxylation of 4-NP to produce 4-nitrocatechol (4-NCA) and the subsequent oxidative release of the nitro group from 4-NCA to produce 2-hydroxy-1,4-benzoquinone. It can also use 4-nitroresorcinol as substrate with a rate of nitrite release similar to that observed with the two physiological substrates, 4-PN and 4-NCA. This chain is 4-nitrophenol 4-monooxygenase/4-nitrocatechol 2-monooxygenase, oxygenase component (npcA), found in Rhodococcus opacus (Nocardia opaca).